The chain runs to 311 residues: tRNA-cytidine(32) 2-sulfurtransferase (311 aa).

Residues 47-52 carry the PP-loop motif motif; the sequence is SGGKDS. Cys-122, Cys-125, and Cys-213 together coordinate [4Fe-4S] cluster.

Belongs to the TtcA family. Homodimer. Mg(2+) serves as cofactor. It depends on [4Fe-4S] cluster as a cofactor.

It is found in the cytoplasm. It carries out the reaction cytidine(32) in tRNA + S-sulfanyl-L-cysteinyl-[cysteine desulfurase] + AH2 + ATP = 2-thiocytidine(32) in tRNA + L-cysteinyl-[cysteine desulfurase] + A + AMP + diphosphate + H(+). Its pathway is tRNA modification. Its function is as follows. Catalyzes the ATP-dependent 2-thiolation of cytidine in position 32 of tRNA, to form 2-thiocytidine (s(2)C32). The sulfur atoms are provided by the cysteine/cysteine desulfurase (IscS) system. The protein is tRNA-cytidine(32) 2-sulfurtransferase of Salmonella typhi.